The sequence spans 94 residues: Integration host factor subunit beta (94 aa).

Belongs to the bacterial histone-like protein family. In terms of assembly, heterodimer of an alpha and a beta chain.

This protein is one of the two subunits of integration host factor, a specific DNA-binding protein that functions in genetic recombination as well as in transcriptional and translational control. The polypeptide is Integration host factor subunit beta (Pseudomonas paraeruginosa (strain DSM 24068 / PA7) (Pseudomonas aeruginosa (strain PA7))).